The following is a 123-amino-acid chain: Large ribosomal subunit protein uL14c (123 aa).

The protein belongs to the universal ribosomal protein uL14 family. As to quaternary structure, part of the 50S ribosomal subunit.

The protein localises to the plastid. It is found in the chloroplast. Functionally, binds to 23S rRNA. The chain is Large ribosomal subunit protein uL14c from Saccharum hybrid (Sugarcane).